We begin with the raw amino-acid sequence, 199 residues long: Pneumococcal vaccine antigen A homolog (199 aa).

It localises to the cell surface. This chain is Pneumococcal vaccine antigen A homolog (pvaA), found in Streptococcus pyogenes serotype M18 (strain MGAS8232).